Here is a 231-residue protein sequence, read N- to C-terminus: Adenosylcobinamide-GDP ribazoletransferase (231 aa).

6 helical membrane-spanning segments follow: residues 24-44 (LWAF…ILYL), 46-66 (LPLS…LLHL), 96-116 (IAGL…LQLL), 159-176 (LALG…VVLF), 181-198 (LAGI…RISL), and 209-229 (LGAT…LVWW).

Belongs to the CobS family. Requires Mg(2+) as cofactor.

It is found in the cell membrane. The catalysed reaction is alpha-ribazole + adenosylcob(III)inamide-GDP = adenosylcob(III)alamin + GMP + H(+). The enzyme catalyses alpha-ribazole 5'-phosphate + adenosylcob(III)inamide-GDP = adenosylcob(III)alamin 5'-phosphate + GMP + H(+). Its pathway is cofactor biosynthesis; adenosylcobalamin biosynthesis; adenosylcobalamin from cob(II)yrinate a,c-diamide: step 7/7. Its function is as follows. Joins adenosylcobinamide-GDP and alpha-ribazole to generate adenosylcobalamin (Ado-cobalamin). Also synthesizes adenosylcobalamin 5'-phosphate from adenosylcobinamide-GDP and alpha-ribazole 5'-phosphate. In Thermococcus kodakarensis (strain ATCC BAA-918 / JCM 12380 / KOD1) (Pyrococcus kodakaraensis (strain KOD1)), this protein is Adenosylcobinamide-GDP ribazoletransferase.